The chain runs to 175 residues: CASP-like protein 2C1 (175 aa).

The Cytoplasmic portion of the chain corresponds to 1 to 7; sequence MVKLRET. Residues 8–28 traverse the membrane as a helical segment; sequence EVILRLCIVFFLLLTSCLIGL. Over 29–45 the chain is Extracellular; it reads DSQTKEIAYIHKNVSFR. A glycan (N-linked (GlcNAc...) asparagine) is linked at Asn41. Residues 46–66 form a helical membrane-spanning segment; it reads YLLALEAELYIDVVVAAYNLV. The Cytoplasmic portion of the chain corresponds to 67-91; that stretch reads QLGLGWYNVEQKTSNPKWFSYLLDQ. The chain crosses the membrane as a helical span at residues 92–112; the sequence is TAAYVVFAGTSAAAQHSLLVV. At 113-136 the chain is on the extracellular side; it reads TGSRELQWMKWCYKFTRFCFQMGS. A helical transmembrane segment spans residues 137–157; sequence AIILNYIAAALMVLLSSISAF. The Cytoplasmic portion of the chain corresponds to 158–175; sequence NLFRLYSPKRFFRFKSSS.

This sequence belongs to the Casparian strip membrane proteins (CASP) family. As to quaternary structure, homodimer and heterodimers.

The protein resides in the cell membrane. In Arabidopsis thaliana (Mouse-ear cress), this protein is CASP-like protein 2C1.